Here is a 1501-residue protein sequence, read N- to C-terminus: Neither inactivation nor afterpotential protein C (1501 aa).

The region spanning 16–282 (FEIYEEIAQG…MVEMVEHPFL (267 aa)) is the Protein kinase domain. ATP contacts are provided by residues 22–30 (IAQGVNAKV) and K45. D145 functions as the Proton acceptor in the catalytic mechanism. Residue S183 is modified to Phosphoserine. The 706-residue stretch at 332-1037 (MYPEDLAALE…FLARLYELQV (706 aa)) folds into the Myosin motor domain. Residues 913 to 934 (LTLLKMLSQNANLGVHFVRCIR) form an actin-binding region. 2 consecutive IQ domains span residues 1036 to 1065 (QVKK…FKLG) and 1072 to 1101 (HDVA…EKSG). The tract at residues 1043–1271 (VQSMMRALLA…RMGESDNIYN (229 aa)) is interaction with rtp. The tract at residues 1066 to 1501 (KKGPEHHDVA…ITLSGYAVDI (436 aa)) is non alpha-helical, C-terminal domain. Disordered stretches follow at residues 1308–1364 (NWGV…DPVR) and 1390–1473 (KTNY…EDSN). Residues 1326-1335 (APPPPPPPMP) are compositionally biased toward pro residues. Low complexity predominate over residues 1336 to 1358 (SSNYYRNNPNQQQRNYQQRSSYP). Residues 1405-1414 (NNRRGSDSGD) show a composition bias toward basic and acidic residues. Positions 1449–1463 (FGQQQRAPTLRQSPA) are enriched in polar residues.

This sequence in the C-terminal section; belongs to the TRAFAC class myosin-kinesin ATPase superfamily. Myosin family. It in the N-terminal section; belongs to the protein kinase superfamily. Ser/Thr protein kinase family. Interacts with rtp. In terms of tissue distribution, expressed in the phototransducing compartment of photoreceptor cells, the rhabdomeres (at protein level).

The protein resides in the cytoplasm. It is found in the cytoskeleton. Its subcellular location is the nucleus. The protein localises to the membrane. It localises to the cell projection. The protein resides in the rhabdomere membrane. The enzyme catalyses L-seryl-[protein] + ATP = O-phospho-L-seryl-[protein] + ADP + H(+). It catalyses the reaction L-threonyl-[protein] + ATP = O-phospho-L-threonyl-[protein] + ADP + H(+). Its function is as follows. Required for photoreceptor cell function. The ninaC proteins combines putative serine/threonine-protein kinase and myosin activities. Essential for the expression and stability of the rtp protein in the photoreceptors. The rtp/ninaC complex is required for stability of inad and inac and the normal termination of phototransduction in the retina. This Drosophila melanogaster (Fruit fly) protein is Neither inactivation nor afterpotential protein C (ninaC).